Reading from the N-terminus, the 301-residue chain is Ornithine carbamoyltransferase (301 aa).

Carbamoyl phosphate contacts are provided by residues R100 and 127 to 130; that span reads HPCQ. L-ornithine is bound by residues N158, D221, and 225–226; that span reads SM. 2 residues coordinate carbamoyl phosphate: C260 and R288.

The protein belongs to the aspartate/ornithine carbamoyltransferase superfamily. OTCase family.

It is found in the cytoplasm. It catalyses the reaction carbamoyl phosphate + L-ornithine = L-citrulline + phosphate + H(+). It participates in amino-acid biosynthesis; L-arginine biosynthesis; L-arginine from L-ornithine and carbamoyl phosphate: step 1/3. Its function is as follows. Reversibly catalyzes the transfer of the carbamoyl group from carbamoyl phosphate (CP) to the N(epsilon) atom of ornithine (ORN) to produce L-citrulline. The chain is Ornithine carbamoyltransferase (argF) from Vibrio sp. (strain 2693).